Reading from the N-terminus, the 656-residue chain is Vi polysaccharide export protein VexE (656 aa).

May be involved in translocation of the Vi antigen. This is Vi polysaccharide export protein VexE (vexE) from Salmonella typhi.